The chain runs to 176 residues: Protein GrpE (176 aa).

Positions 1-28 are disordered; sequence MSEQKQEFENENAENSEHLQDENLQNIE.

It belongs to the GrpE family. In terms of assembly, homodimer.

It is found in the cytoplasm. In terms of biological role, participates actively in the response to hyperosmotic and heat shock by preventing the aggregation of stress-denatured proteins, in association with DnaK and GrpE. It is the nucleotide exchange factor for DnaK and may function as a thermosensor. Unfolded proteins bind initially to DnaJ; upon interaction with the DnaJ-bound protein, DnaK hydrolyzes its bound ATP, resulting in the formation of a stable complex. GrpE releases ADP from DnaK; ATP binding to DnaK triggers the release of the substrate protein, thus completing the reaction cycle. Several rounds of ATP-dependent interactions between DnaJ, DnaK and GrpE are required for fully efficient folding. In Campylobacter jejuni subsp. jejuni serotype O:2 (strain ATCC 700819 / NCTC 11168), this protein is Protein GrpE.